Reading from the N-terminus, the 423-residue chain is Histidine--tRNA ligase (423 aa).

The protein belongs to the class-II aminoacyl-tRNA synthetase family. In terms of assembly, homodimer.

It is found in the cytoplasm. It catalyses the reaction tRNA(His) + L-histidine + ATP = L-histidyl-tRNA(His) + AMP + diphosphate + H(+). The chain is Histidine--tRNA ligase from Prochlorococcus marinus (strain NATL1A).